The primary structure comprises 87 residues: Small ribosomal subunit protein uS17 (87 aa).

This sequence belongs to the universal ribosomal protein uS17 family. In terms of assembly, part of the 30S ribosomal subunit.

In terms of biological role, one of the primary rRNA binding proteins, it binds specifically to the 5'-end of 16S ribosomal RNA. In Oceanobacillus iheyensis (strain DSM 14371 / CIP 107618 / JCM 11309 / KCTC 3954 / HTE831), this protein is Small ribosomal subunit protein uS17.